Consider the following 136-residue polypeptide: Classical arabinogalactan protein 11 (136 aa).

An N-terminal signal peptide occupies residues methionine 1–alanine 20. Low complexity-rich tracts occupy residues proline 24–proline 56, serine 68–valine 81, and proline 89–alanine 107. The interval proline 24–threonine 115 is disordered. The GPI-anchor amidated serine moiety is linked to residue serine 112. The propeptide at glycine 113–leucine 136 is removed in mature form.

This sequence belongs to the classical AGP family. In terms of processing, O-glycosylated on the hydroxyproline residues.

The protein localises to the cell membrane. Functionally, proteoglycan that seems to be implicated in diverse developmental roles such as differentiation, cell-cell recognition, embryogenesis and programmed cell death. The sequence is that of Classical arabinogalactan protein 11 (AGP11) from Arabidopsis thaliana (Mouse-ear cress).